The primary structure comprises 389 residues: Chalcone synthase E (389 aa).

Cys164 is a catalytic residue.

The protein belongs to the thiolase-like superfamily. Chalcone/stilbene synthases family.

It carries out the reaction (E)-4-coumaroyl-CoA + 3 malonyl-CoA + 3 H(+) = 2',4,4',6'-tetrahydroxychalcone + 3 CO2 + 4 CoA. The protein operates within secondary metabolite biosynthesis; flavonoid biosynthesis. Its function is as follows. The primary product of this enzyme is 4,2',4',6'-tetrahydroxychalcone (also termed naringenin-chalcone or chalcone) which can under specific conditions spontaneously isomerize into naringenin. The chain is Chalcone synthase E (CHSE) from Ipomoea nil (Japanese morning glory).